Consider the following 536-residue polypeptide: Pre-mRNA-splicing regulator female-lethal(2)D (536 aa).

The segment at 1–91 (MSVAAMTMDD…LQQQQQQQQQ (91 aa)) is disordered. The span at 28-39 (QNLNILNSSQNS) shows a compositional bias: low complexity. Positions 57 to 69 (HHHHHPHPHHHHH) are enriched in basic residues. A compositionally biased stretch (low complexity) spans 72 to 91 (QQQQQQQQQHLQQQQQQQQQ). Residues 254–319 (KSFSEEVKKS…KQAIKDEVVA (66 aa)) are a coiled coil. The interval 424-450 (APRTLPPKKSKLRGITTRRNSQLEEDH) is disordered.

It belongs to the fl(2)d family. In terms of assembly, component of the WMM complex, a N6-methyltransferase complex composed of a catalytic subcomplex, named MAC, and of an associated subcomplex, named MACOM. The MAC subcomplex is composed of Ime4/Mettl3 and Mettl14. The MACOM subcomplex is composed of fl(2)d, Flacc/Xio, Hakai, vir, and, in some cases of nito. Interacts with vir and msk. Part of a complex containing fl(2)d, Sxl and vir.

The protein localises to the nucleus. Functionally, associated component of the WMM complex, a complex that mediates N6-methyladenosine (m6A) methylation of mRNAs, a modification that plays a role in the efficiency of mRNA splicing and is required for sex determination. Required for sex determination and dosage compensation via Sxl alternative splicing: m6A methylation acts as a key regulator of Sxl pre-mRNA and promotes female-specific alternative splicing of Sxl, which determines female physiognomy. M6A methylation is also required for neuronal functions. Required for proper inclusion of regulated exons in Ubx transcripts, leading to isoforms Ia/b and IIa/b. The polypeptide is Pre-mRNA-splicing regulator female-lethal(2)D (Drosophila melanogaster (Fruit fly)).